The chain runs to 233 residues: tRNA1(Val) (adenine(37)-N6)-methyltransferase (233 aa).

Belongs to the methyltransferase superfamily. tRNA (adenine-N(6)-)-methyltransferase family.

It localises to the cytoplasm. It carries out the reaction adenosine(37) in tRNA1(Val) + S-adenosyl-L-methionine = N(6)-methyladenosine(37) in tRNA1(Val) + S-adenosyl-L-homocysteine + H(+). Its function is as follows. Specifically methylates the adenine in position 37 of tRNA(1)(Val) (anticodon cmo5UAC). This chain is tRNA1(Val) (adenine(37)-N6)-methyltransferase, found in Shewanella amazonensis (strain ATCC BAA-1098 / SB2B).